A 599-amino-acid polypeptide reads, in one-letter code: MAAAPWLHLSRRRSSTQTSLRSFLICSSSFDSDEFISSQSRVIGGRGEEEVRFSGALFSRMIHSSTYHPYRQIPLPHSSVQLLDASLGCRGFSSGSSNVSDGCDEEVESECDNDEETGVSCVESSTNPEEVERVCKVIDELFALDRNMEAVLDEMKLDLSHDLIVEVLERFRHARKPAFRFFCWAAERQGFAHDSRTYNSMMSILAKTRQFETMVSVLEEMGTKGLLTMETFTIAMKAFAAAKERKKAVGIFELMKKYKFKIGVETINCLLDSLGRAKLGKEAQVLFDKLKERFTPNMMTYTVLLNGWCRVRNLIEAARIWNDMIDQGLKPDIVAHNVMLEGLLRSRKKSDAIKLFHVMKSKGPCPNVRSYTIMIRDFCKQSSMETAIEYFDDMVDSGLQPDAAVYTCLITGFGTQKKLDTVYELLKEMQEKGHPPDGKTYNALIKLMANQKMPEHATRIYNKMIQNEIEPSIHTFNMIMKSYFMARNYEMGRAVWEEMIKKGICPDDNSYTVLIRGLIGEGKSREACRYLEEMLDKGMKTPLIDYNKFAADFHRGGQPEIFEELAQRAKFSGKFAAAEIFARWAQMTRRRFKQRFMED.

A mitochondrion-targeting transit peptide spans 1-99 (MAAAPWLHLS…RGFSSGSSNV (99 aa)). PPR repeat units lie at residues 194–228 (DSRT…GLLT), 230–262 (ETFT…KFKI), 263–293 (GVET…LKER), 297–331 (NMMT…GLKP), 332–366 (DIVA…GPCP), 367–401 (NVRS…GLQP), 402–436 (DAAV…GHPP), 437–471 (DGKT…EIEP), 472–506 (SIHT…GICP), and 507–541 (DDNS…GMKT).

Belongs to the PPR family. P subfamily.

The protein localises to the mitochondrion. In Arabidopsis thaliana (Mouse-ear cress), this protein is Pentatricopeptide repeat-containing protein At3g62470, mitochondrial.